Reading from the N-terminus, the 430-residue chain is CC-adding tRNA nucleotidyltransferase (430 aa).

Gly33 to Arg36 is a binding site for CTP. Mg(2+) contacts are provided by Asp46 and Asp48. Residues Arg108–Asp109, Asn113, Asp150–Arg159, and Arg190 contribute to the CTP site.

It belongs to the tRNA nucleotidyltransferase/poly(A) polymerase family. Requires Mg(2+) as cofactor.

The enzyme catalyses a tRNA precursor + 2 CTP = a tRNA with a 3' CC end + 2 diphosphate. Its function is as follows. tRNA nucleotidyltransferase involved in the synthesis of the tRNA CCA terminus. Adds the two cytidine residues to tRNA. This Geobacter sulfurreducens (strain ATCC 51573 / DSM 12127 / PCA) protein is CC-adding tRNA nucleotidyltransferase.